We begin with the raw amino-acid sequence, 574 residues long: Iron hydrogenase 1 (574 aa).

The 2Fe-2S ferredoxin-type domain maps to 1 to 78; it reads MKTIIINGVQ…GMIINTNSDA (78 aa). 4 residues coordinate [2Fe-2S] cluster: Cys-34, Cys-46, Cys-49, and Cys-62. Residues 78–117 form the 4Fe-4S His(Cys)3-ligated-type domain; it reads AVNEKIKSRISQLLDIHEFKCGPCNRRENCEFLKLVIKYK. 16 residues coordinate [4Fe-4S] cluster: His-94, Cys-98, Cys-101, Cys-107, Cys-147, Cys-150, Cys-153, Cys-157, Cys-190, Cys-193, Cys-196, Cys-200, Cys-300, Cys-355, Cys-499, and Cys-503. 4Fe-4S ferredoxin-type domains lie at 138–167 and 181–210; these read KSLT…YAMK and DEKC…EKSH. Residue Cys-503 coordinates Fe(2+).

As to quaternary structure, monomer. [2Fe-2S] cluster is required as a cofactor. It depends on [4Fe-4S] cluster as a cofactor. Requires Fe(2+) as cofactor.

It catalyses the reaction H2 + 2 oxidized [2Fe-2S]-[ferredoxin] = 2 reduced [2Fe-2S]-[ferredoxin] + 2 H(+). The protein is Iron hydrogenase 1 of Clostridium pasteurianum.